Reading from the N-terminus, the 282-residue chain is Probable aquaporin PIP2-6 (282 aa).

Helical transmembrane passes span 39 to 59 and 76 to 96; these read ALIA…ATVI and LGIA…TAGI. An NPA 1 motif is present at residues 102 to 104; sequence NPA. A run of 3 helical transmembrane segments spans residues 121 to 141, 163 to 183, and 197 to 217; these read VMYI…VKGI, GTAL…VFSA, and VLAP…TIPI. Positions 223–225 match the NPA 2 motif; sequence NPA. The helical transmembrane segment at 245 to 265 threads the bilayer; that stretch reads IFWAGPFIGALAAAAYHQYIL.

This sequence belongs to the MIP/aquaporin (TC 1.A.8) family. PIP (TC 1.A.8.11) subfamily. As to expression, expressed in roots and leaves.

The protein localises to the cell membrane. Its function is as follows. Aquaporins facilitate the transport of water and small neutral solutes across cell membranes. This Oryza sativa subsp. japonica (Rice) protein is Probable aquaporin PIP2-6 (PIP2-6).